The following is a 251-amino-acid chain: NADPH-dependent oxidoreductase (251 aa).

The protein belongs to the flavin oxidoreductase frp family. It depends on FMN as a cofactor.

In terms of biological role, reduces FMN, organic nitro compounds and disulfide DTNB. Involved in maintenance of the cellular redox state and the disulfide stress response. This chain is NADPH-dependent oxidoreductase (nfrA), found in Staphylococcus aureus (strain MRSA252).